Here is a 242-residue protein sequence, read N- to C-terminus: Large ribosomal subunit protein uL1 (242 aa).

Belongs to the universal ribosomal protein uL1 family. As to quaternary structure, part of the 50S ribosomal subunit.

In terms of biological role, binds directly to 23S rRNA. The L1 stalk is quite mobile in the ribosome, and is involved in E site tRNA release. Functionally, protein L1 is also a translational repressor protein, it controls the translation of the L11 operon by binding to its mRNA. The polypeptide is Large ribosomal subunit protein uL1 (Dictyoglomus turgidum (strain DSM 6724 / Z-1310)).